We begin with the raw amino-acid sequence, 232 residues long: 5'-methylthioadenosine/S-adenosylhomocysteine nucleosidase (232 aa).

Glu-12 serves as the catalytic Proton acceptor. Residues Gly-78, Ile-152, and 173 to 174 (ME) contribute to the substrate site. Catalysis depends on Asp-197, which acts as the Proton donor.

It belongs to the PNP/UDP phosphorylase family. MtnN subfamily. In terms of assembly, homodimer.

It carries out the reaction S-adenosyl-L-homocysteine + H2O = S-(5-deoxy-D-ribos-5-yl)-L-homocysteine + adenine. The catalysed reaction is S-methyl-5'-thioadenosine + H2O = 5-(methylsulfanyl)-D-ribose + adenine. The enzyme catalyses 5'-deoxyadenosine + H2O = 5-deoxy-D-ribose + adenine. Its pathway is amino-acid biosynthesis; L-methionine biosynthesis via salvage pathway; S-methyl-5-thio-alpha-D-ribose 1-phosphate from S-methyl-5'-thioadenosine (hydrolase route): step 1/2. Its function is as follows. Catalyzes the irreversible cleavage of the glycosidic bond in both 5'-methylthioadenosine (MTA) and S-adenosylhomocysteine (SAH/AdoHcy) to adenine and the corresponding thioribose, 5'-methylthioribose and S-ribosylhomocysteine, respectively. Also cleaves 5'-deoxyadenosine, a toxic by-product of radical S-adenosylmethionine (SAM) enzymes, into 5-deoxyribose and adenine. Thus, is required for in vivo function of the radical SAM enzymes biotin synthase and lipoic acid synthase, that are inhibited by 5'-deoxyadenosine accumulation. The sequence is that of 5'-methylthioadenosine/S-adenosylhomocysteine nucleosidase from Shigella boydii serotype 4 (strain Sb227).